We begin with the raw amino-acid sequence, 280 residues long: MSINLQNVSYTYQAGTPFEGRALFNINLDILDGSYTAFIGHTGSGKSTIMQLLNGLHVPTTGIVSVDKQDITNHSKNKEIKSIRKHVGLVFQFPESQLFEETVLKDVAFGPQNFGVSPEEAEALAREKLALVGISENLFEKNPFELSGGQMRRVAIAGILAMQPKVLVLDEPTAGLDPKGRKELMTIFKKLHQSGMTIVLVTHLMDDVANYADFVYVLDKGKIILSGKPKTIFQQVSLLEKKQLGVPKVTKLAQRLVDRGIPISSLPITLEELKEVLKHG.

The 243-residue stretch at 3-245 (INLQNVSYTY…VSLLEKKQLG (243 aa)) folds into the ABC transporter domain. 40–47 (GHTGSGKS) is an ATP binding site.

The protein belongs to the ABC transporter superfamily. Energy-coupling factor EcfA family. In terms of assembly, forms a stable energy-coupling factor (ECF) transporter complex composed of 2 membrane-embedded substrate-binding proteins (S component), 2 ATP-binding proteins (A component) and 2 transmembrane proteins (T component).

The protein localises to the cell membrane. Its function is as follows. ATP-binding (A) component of a common energy-coupling factor (ECF) ABC-transporter complex. Unlike classic ABC transporters this ECF transporter provides the energy necessary to transport a number of different substrates. The protein is Energy-coupling factor transporter ATP-binding protein EcfA2 of Streptococcus pyogenes serotype M28 (strain MGAS6180).